The chain runs to 273 residues: Putative pyruvate, phosphate dikinase regulatory protein (273 aa).

149 to 156 (GPSRTSKT) provides a ligand contact to ADP.

It belongs to the pyruvate, phosphate/water dikinase regulatory protein family. PDRP subfamily.

It carries out the reaction N(tele)-phospho-L-histidyl/L-threonyl-[pyruvate, phosphate dikinase] + ADP = N(tele)-phospho-L-histidyl/O-phospho-L-threonyl-[pyruvate, phosphate dikinase] + AMP + H(+). The enzyme catalyses N(tele)-phospho-L-histidyl/O-phospho-L-threonyl-[pyruvate, phosphate dikinase] + phosphate + H(+) = N(tele)-phospho-L-histidyl/L-threonyl-[pyruvate, phosphate dikinase] + diphosphate. Functionally, bifunctional serine/threonine kinase and phosphorylase involved in the regulation of the pyruvate, phosphate dikinase (PPDK) by catalyzing its phosphorylation/dephosphorylation. The polypeptide is Putative pyruvate, phosphate dikinase regulatory protein (Rickettsia canadensis (strain McKiel)).